A 156-amino-acid polypeptide reads, in one-letter code: MSMVVYNNQECEEGNPFAGALTEFSQWLWSRPLGNPGAEDAEEEAIAAQEELEFPEDEAQARHSCLQRTTSWATPKEVSPSGRVYQTVRHSRMEYSRPTMSIRSQASYFSSSARPLPPPPVPSLMSWTPIAKYHPSSPTSTSSKLRRAAPKLIKRG.

The segment at 38-54 (AEDAEEEAIAAQEELEF) is homodimerization. Disordered regions lie at residues 55 to 80 (PEDE…EVSP) and 131 to 156 (AKYH…IKRG). Residues 57-156 (DEAQARHSCL…RAAPKLIKRG (100 aa)) form an RNA-binding region. Residues serine 71, serine 79, serine 137, and serine 140 each carry the phosphoserine modification. Over residues 144 to 156 (KLRRAAPKLIKRG) the composition is skewed to basic residues.

It belongs to the polerovirus movement protein family. As to quaternary structure, homodimer. Heterodimer with movement protein P3a. Expressed as a nonphosphorylated 20kDa form and a phosphorylated 22kDa form. Phosphorylated by a host PKC-related kinase. Serine phosphorylation is required for plamodesma targeting.

The protein localises to the host cell junction. The protein resides in the host plasmodesma. It localises to the host mitochondrion outer membrane. Its subcellular location is the host Golgi apparatus. It is found in the host chloroplast envelope. Together with movement protein P3a, facilitates long-distance movement of virions in host. Transports viral genome to neighboring plant cells directly through plasmosdesmata, without any budding. The movement protein allows efficient cell to cell propagation, by bypassing the host cell wall barrier. Binds ssRNA. This chain is Movement protein P17, found in Solanum tuberosum (Potato).